Consider the following 1274-residue polypeptide: MLLILVLGVSLAAASRPECFNPRFTLTPLNHTLNYTSIKAKVSNVLLPDPYIAYSGQTLRQNLFMADMSNTILYPVTPPANGANGGFIYNTSIIPVSAGLFVNTWMYRQPASSRAYCQEPFGVAFGDTFENDRIAILIMAPDNLGSWSAVAPRNQTNIYLLVCSNATLCINPGFNRWGPAGSFIAPDALVDHSNSCFVNNTFSVNISTSRISLAFLFKDGDLLIYHSGWLPTSNFEHGFSRGSHPMTYFMSLPVGGNLPRAQFFQSIVRSNAIDKGDGMCTNFDVNLHVAHLINRDLLVSYFNNGSVANAADCADSAAEELYCVTGSFDPPTGVYPLSRYRAQVAGFVRVTQRGSYCTPPYSVLQDPPQPVVWRRYMLYDCVFDFTVVVDSLPTHQLQCYGVSPRRLASMCYGSVTLDVMRINETHLNNLFNRVPDTFSLYNYALPDNFYGCLHAFYLNSTAPYAVANRFPIKPGGRQSNSAFIDTVINAAHYSPFSYVYGLAVITLKPAAGSKLVCPVANDTVVITDRCVQYNLYGYTGTGVLSKNTSLVIPDGKVFTASSTGTIIGVSINSTTYSIMPCVTVPVSVGYHPNFERALLFNGLSCSQRSRAVTEPVSVLWSASATAQDAFDTPSGCVVNVELRNTTIVNTCAMPIGNSLCFINGSIATANADSLPRLQLVNYDPLYDNSTATPMTPVYWVKVPTNFTLSATEEYIQTTAPKITIDCARYLCGDSSRCLNVLLHYGTFCNDINKALSRVSTILDSALLSLVKELSINTRDEVTTFSFDGDYNFTGLMGCLGPNCGATTYRSAFSDLLYDKVRITDPGFMQSYQKCIDSQWGGSIRDLLCTQTYNGIAVLPPIVSPAMQALYTSLLVGAVASSGYTFGITSAGVIPFATQLQFRLNGIGVTTQVLVENQKLIASSFNNALVNIQKGFTETSIALSKMQDVINQHAAQLHTLVVQLGNSFGAISSSINEIFSRLEGLAANAEVDRLINGRMMVLNTYVTQLLIQASEAKAQNALAAQKISECVKAQSLRNDFCGNGTHVLSIPQLAPNGVLFIHYAYTPTEYAFVQTSAGLCHNGTGYAPRQGMFVLPNNTNMWHFTTMQFYNPVNISASNTQVLTSCSVNYTSVNYTVLEPSVPGDYDFQKEFDKFYKNLSTIFNNTFNPNDFNFSTVDVTAQIKSLHDVVNQLNQSFIDLKKLNVYEKTIKWPWYVWLAMIAGIVGLVLAVIMLMCMTNCCSCFKGMCDCRRCCGSYDSYDDVYPAVRVNKKRTV.

An N-terminal signal peptide occupies residues 1 to 11 (MLLILVLGVSL). The Extracellular portion of the chain corresponds to 12–1212 (AAASRPECFN…NVYEKTIKWP (1201 aa)). The BetaCoV S1-NTD domain maps to 15–325 (SRPECFNPRF…SAAEELYCVT (311 aa)). 2 disulfides stabilise this stretch: cysteine 19-cysteine 169 and cysteine 163-cysteine 196. N-linked (GlcNAc...) asparagine; by host glycans are attached at residues asparagine 30, asparagine 34, asparagine 90, asparagine 154, asparagine 165, asparagine 199, asparagine 205, and asparagine 304. Disulfide bonds link cysteine 313-cysteine 323, cysteine 357-cysteine 381, cysteine 399-cysteine 452, and cysteine 411-cysteine 517. The region spanning 355-519 (SYCTPPYSVL…AAGSKLVCPV (165 aa)) is the BetaCoV S1-CTD domain. Residues asparagine 423, asparagine 459, asparagine 521, asparagine 547, asparagine 572, asparagine 644, asparagine 663, asparagine 688, asparagine 705, and asparagine 791 are each glycosylated (N-linked (GlcNAc...) asparagine; by host). 2 fusion peptide regions span residues 810-831 (SAFS…MQSY) and 829-852 (QSYQ…TQTY). An intrachain disulfide couples cysteine 834 to cysteine 848. The interval 917–967 (QKLIASSFNNALVNIQKGFTETSIALSKMQDVINQHAAQLHTLVVQLGNSF) is heptad repeat 1. Residues 946-990 (QDVINQHAAQLHTLVVQLGNSFGAISSSINEIFSRLEGLAANAEV) are a coiled coil. Residues asparagine 1042, asparagine 1081, asparagine 1096, asparagine 1113, asparagine 1128, asparagine 1133, asparagine 1157, asparagine 1163, asparagine 1172, and asparagine 1193 are each glycosylated (N-linked (GlcNAc...) asparagine; by host). Positions 1162 to 1201 (FNNTFNPNDFNFSTVDVTAQIKSLHDVVNQLNQSFIDLKK) are heptad repeat 2. Residues 1174–1202 (STVDVTAQIKSLHDVVNQLNQSFIDLKKL) are a coiled coil. The chain crosses the membrane as a helical span at residues 1213–1233 (WYVWLAMIAGIVGLVLAVIML). Topologically, residues 1234-1274 (MCMTNCCSCFKGMCDCRRCCGSYDSYDDVYPAVRVNKKRTV) are cytoplasmic. Residues 1273 to 1274 (TV) carry the KxHxx motif.

Belongs to the betacoronaviruses spike protein family. Homotrimer; each monomer consists of a S1 and a S2 subunit. The resulting peplomers protrude from the virus surface as spikes. Specific enzymatic cleavages in vivo yield mature proteins. The precursor is processed into S1 and S2 by host cell furin or another cellular protease to yield the mature S1 and S2 proteins. Additionally, a second cleavage leads to the release of a fusion peptide after viral attachment to host cell receptor. Post-translationally, the cytoplasmic Cys-rich domain is palmitoylated. Spike glycoprotein is digested within host endosomes.

The protein resides in the virion membrane. It is found in the host endoplasmic reticulum-Golgi intermediate compartment membrane. Its subcellular location is the host cell membrane. Functionally, attaches the virion to the cell membrane by interacting with host receptor, initiating the infection. Its function is as follows. Mediates fusion of the virion and cellular membranes by acting as a class I viral fusion protein. Under the current model, the protein has at least three conformational states: pre-fusion native state, pre-hairpin intermediate state, and post-fusion hairpin state. During viral and target cell membrane fusion, the coiled coil regions (heptad repeats) assume a trimer-of-hairpins structure, positioning the fusion peptide in close proximity to the C-terminal region of the ectodomain. The formation of this structure appears to drive apposition and subsequent fusion of viral and target cell membranes. Acts as a viral fusion peptide which is unmasked following S2 cleavage occurring upon virus endocytosis. The chain is Spike glycoprotein from Rousettus leschenaultii (Leschenault's rousette).